We begin with the raw amino-acid sequence, 289 residues long: Signal peptidase I (289 aa).

Over 1 to 43 the chain is Cytoplasmic; it reads MKKLTSTTTTLWDNKLFINNLKNFMQTNTESNNNKTTAQEWKS. Residues 44–64 form a helical membrane-spanning segment; that stretch reads FILVVVIALMIRILIIESFVV. At 65-289 the chain is on the periplasmic side; it reads PTGSMKATIL…IFRNLYSIED (225 aa). Active-site residues include serine 68 and lysine 131.

It belongs to the peptidase S26 family.

The protein localises to the cell inner membrane. The enzyme catalyses Cleavage of hydrophobic, N-terminal signal or leader sequences from secreted and periplasmic proteins.. This Rickettsia bellii (strain OSU 85-389) protein is Signal peptidase I (lepB).